Consider the following 58-residue polypeptide: Large ribosomal subunit protein bL32 (58 aa).

Disordered stretches follow at residues 1–22 (MAVP…HWKR) and 39–58 (LSGR…DDEE).

Belongs to the bacterial ribosomal protein bL32 family.

In Crocosphaera subtropica (strain ATCC 51142 / BH68) (Cyanothece sp. (strain ATCC 51142)), this protein is Large ribosomal subunit protein bL32.